The primary structure comprises 443 residues: Probable D-serine dehydratase (443 aa).

Lys106 is modified (N6-(pyridoxal phosphate)lysine).

It belongs to the serine/threonine dehydratase family. DsdA subfamily. Pyridoxal 5'-phosphate serves as cofactor.

The enzyme catalyses D-serine = pyruvate + NH4(+). In Cupriavidus pinatubonensis (strain JMP 134 / LMG 1197) (Cupriavidus necator (strain JMP 134)), this protein is Probable D-serine dehydratase.